The primary structure comprises 149 residues: Thioredoxin-like protein 4B (149 aa).

This sequence belongs to the DIM1 family. As to quaternary structure, homodimer. Interacts with the U5-102 kDa protein subunit of the spliceosome.

It localises to the nucleus. Its function is as follows. Essential role in pre-mRNA splicing. Required in cell cycle progression for S/G(2) transition. This is Thioredoxin-like protein 4B (Txnl4b) from Mus musculus (Mouse).